We begin with the raw amino-acid sequence, 312 residues long: Ribosomal protein L11 methyltransferase (312 aa).

S-adenosyl-L-methionine contacts are provided by Thr162, Gly183, Asp205, and Asn248.

The protein belongs to the methyltransferase superfamily. PrmA family.

It localises to the cytoplasm. The catalysed reaction is L-lysyl-[protein] + 3 S-adenosyl-L-methionine = N(6),N(6),N(6)-trimethyl-L-lysyl-[protein] + 3 S-adenosyl-L-homocysteine + 3 H(+). Its function is as follows. Methylates ribosomal protein L11. In Anoxybacillus flavithermus (strain DSM 21510 / WK1), this protein is Ribosomal protein L11 methyltransferase.